Reading from the N-terminus, the 296-residue chain is 4-hydroxy-tetrahydrodipicolinate synthase (296 aa).

Threonine 49 lines the pyruvate pocket. Catalysis depends on tyrosine 137, which acts as the Proton donor/acceptor. The active-site Schiff-base intermediate with substrate is the lysine 166. Valine 208 contributes to the pyruvate binding site.

It belongs to the DapA family. Homotetramer; dimer of dimers.

Its subcellular location is the cytoplasm. It catalyses the reaction L-aspartate 4-semialdehyde + pyruvate = (2S,4S)-4-hydroxy-2,3,4,5-tetrahydrodipicolinate + H2O + H(+). Its pathway is amino-acid biosynthesis; L-lysine biosynthesis via DAP pathway; (S)-tetrahydrodipicolinate from L-aspartate: step 3/4. Its function is as follows. Catalyzes the condensation of (S)-aspartate-beta-semialdehyde [(S)-ASA] and pyruvate to 4-hydroxy-tetrahydrodipicolinate (HTPA). This is 4-hydroxy-tetrahydrodipicolinate synthase from Desulforamulus reducens (strain ATCC BAA-1160 / DSM 100696 / MI-1) (Desulfotomaculum reducens).